The chain runs to 136 residues: ATP synthase epsilon chain (136 aa).

Belongs to the ATPase epsilon chain family. As to quaternary structure, F-type ATPases have 2 components, CF(1) - the catalytic core - and CF(0) - the membrane proton channel. CF(1) has five subunits: alpha(3), beta(3), gamma(1), delta(1), epsilon(1). CF(0) has three main subunits: a, b and c.

It is found in the cell inner membrane. Functionally, produces ATP from ADP in the presence of a proton gradient across the membrane. This is ATP synthase epsilon chain from Hydrogenobaculum sp. (strain Y04AAS1).